A 138-amino-acid polypeptide reads, in one-letter code: Protein FAM136A (138 aa).

At Ala2 the chain carries N-acetylalanine. Phosphothreonine occurs at positions 124 and 126.

The protein belongs to the FAM136 family.

This Homo sapiens (Human) protein is Protein FAM136A (FAM136A).